An 865-amino-acid polypeptide reads, in one-letter code: MNSNQLRETFLNYFKQLDHEVVPGSSLIPENDPTLLFTNAGMVQFKDVFLGVETRPYQRAVSIQPCMRAGGKHNDLENVGYTARHHTFFEMLGNFSFGDYFKRDAIKFAWDFLTNVLKLPPQRLWVTVFQDDFESESIWLKEMKINPERFSRCGEKDNFWQMRDTGPCGPCTEIFYDHGPTISGGPPGSAEADGDRYVEIWNLVFMQYNRDAKGNLLPLAKPSVDTGMGLERLAAVMQGVHDNYDIDLFQYLLKALRTLLKTEDLHNTSMRVIVDHIRSVAFLIADGVIPSNEGRGYVLRRIIRRAVRHGYKLGQEEPFFYQLTKPLVEEMGGAYPLLRKSQALIEQTIKQEEIQFSNTLTKGLKILDHEMAGLPSRQIPGNLIFQLYDTYGFPPDLTADIARERDFVMDYAGFDKAMERQREQSQQAHQFVANYAQKASIGGETQFVGYETLNSQANVISLLQNDQPINRLNESEKGVVVLDRTPFYAESGGQVGDQGFLYFEKGSFRVKDTKKQGDIYLHIGEMLQGHLNVKDKVRAEVDVSRFDIMRNHSATHLLHEALRRVLGERVMQKGSLVEAKRLRFDFSHAKPLTPEELQAVERLVNQQIQANLLSTIEVMTPEEAKKKGALALFGERYGKEVRVLEMGDFSTEICGGTHTERTGEIGLFKIVSESGCAAGIRRIEALTGKAALDYIESAEQQLRSLSDLLKTNRKNLAAKLSQILEDHRKLEKELAKLKQRLASQQLESLINQVVDVHDIRTLAIRLEAVDRETLRAIVDQLKQKLGKAAIVLATIEEGRIQLVAGVTKNCLEHFNATELLAPIAEKVGGRSGGRPDLAQGAGERPENLEAALAAVPKWIEKKLKE.

4 residues coordinate Zn(2+): H552, H556, C654, and H658.

The protein belongs to the class-II aminoacyl-tRNA synthetase family. It depends on Zn(2+) as a cofactor.

The protein localises to the cytoplasm. The enzyme catalyses tRNA(Ala) + L-alanine + ATP = L-alanyl-tRNA(Ala) + AMP + diphosphate. Its function is as follows. Catalyzes the attachment of alanine to tRNA(Ala) in a two-step reaction: alanine is first activated by ATP to form Ala-AMP and then transferred to the acceptor end of tRNA(Ala). Also edits incorrectly charged Ser-tRNA(Ala) and Gly-tRNA(Ala) via its editing domain. The chain is Alanine--tRNA ligase from Coxiella burnetii (strain Dugway 5J108-111).